The chain runs to 704 residues: Rabphilin-3A (704 aa).

The segment covering 1 to 12 (MTDTVFSSSSSR) has biased composition (polar residues). The tract at residues 1 to 52 (MTDTVFSSSSSRWMCPSDRPLQSNDKEQLQTGWSVHPSGQPDRQRKQEELTD) is disordered. The region spanning 44 to 161 (QRKQEELTDE…KRSGAWFFKG (118 aa)) is the RabBD domain. Residues 92 to 149 (GDGVNRCILCGEQLGMLGSACVVCEDCKKNVCTKCGVETSNNRPHPVWLCKICIEQRE) form an FYVE-type zinc finger. Residues Cys98, Cys101, Cys115, Cys118, Cys123, Cys126, Cys141, and Cys144 each contribute to the Zn(2+) site. A disordered region spans residues 167–398 (LPQPMPIKKN…EEEANSYDSD (232 aa)). Positions 205-214 (TRGDTEDRRG) are enriched in basic and acidic residues. Residue Arg229 is modified to Omega-N-methylarginine. Ser277 is subject to Phosphoserine. Residues 279–290 (QASRPAPASMQS) are compositionally biased toward low complexity. Pro residues predominate over residues 291 to 310 (PAPPQPGQPGPPGGSRPSPG). Residues 366–380 (QASAAAPQPVVASAR) are compositionally biased toward low complexity. The span at 385–398 (PEEDEEEANSYDSD) shows a compositional bias: acidic residues. In terms of domain architecture, C2 1 spans 402-524 (TLGALEFSLL…KPNQRKNFNI (123 aa)). Ca(2+) is bound by residues Met432, Asp433, Asp439, Asp494, Glu495, Asp496, Glu502, Glu549, Asp591, Asp597, Asp651, Tyr652, Asp653, and Asp659. The C2 2 domain occupies 560-693 (ERGKILVSLM…NKDKKIERWH (134 aa)). A phosphoserine mark is found at Ser702 and Ser703.

In terms of assembly, interacts with RAB3B, RAB3C, RAB3D, RAB8A, RAB27A and RAB27B. Interacts with RAB3A; this interaction recruits RPH3A to synaptic vesicules. Interacts (via C2B domain) with SNAP25. Interacts with deubiquitinating enzyme CAND1; this interaction results in the deubiquitination of RPH3A. Interacts with GRIN2A and DLG4; this ternary complex regulates NMDA receptor composition at postsynaptic membranes. Interacts with SNCA. Ca(2+) serves as cofactor. Ubiquitinated. Deubiquitinated by CAND1 to prevent its degradation. As to expression, specifically expressed in brain.

Its subcellular location is the cytoplasmic vesicle. The protein resides in the secretory vesicle. The protein localises to the synaptic vesicle membrane. It localises to the cell projection. It is found in the dendritic spine. Its subcellular location is the postsynaptic cell membrane. The protein resides in the membrane. Plays an essential role in docking and fusion steps of regulated exocytosis. At the presynaptic level, RPH3A is recruited by RAB3A to the synaptic vesicle membrane in a GTP-dependent manner where it modulates synaptic vesicle trafficking and calcium-triggered neurotransmitter release. In the post-synaptic compartment, forms a ternary complex with GRIN2A and DLG4 and regulates NMDA receptor stability. Also plays a role in the exocytosis of arginine vasopressin hormone. This Bos taurus (Bovine) protein is Rabphilin-3A (RPH3A).